A 1257-amino-acid polypeptide reads, in one-letter code: MSTGVLQFVKGIDFSGNDFSGDRFPHDVEQMTQMTWLKLNDSKLEQVPDELSRCANLEHLQMAHNQLISVHGELSDLPRLRSVIVRDNNLKTAGIPTDIFRMKDLTIIDLSRNQLREVPTNLEYAKGSIVLNLSYNNIETIPNSVCANLIDLLFLDLSNNKLDMLPPQIRRLSMLQSLKLSNNPLNHFQLKQLPSMTSLSVLHMSNTNRTLDNIPPTLDDMHNLRDVDFSENNLPIVPEALFKLRNLRKLNLSGNKIEKLNMTEGEWENLETLNMSHNQLTVLPDCVVKLTRLTKLYAANNQLTFEGIPSGIGKLIQLTVLHLSYNKLELVPEGISRCVKLQKLKLDHNRLITLPEGIHLLPDLKVLDLHENENLVMPPKPNDARKKLAFYNIDFSLEHQRKIAGQMTSPSSSISSVHSGGARQDALARRKEFIRRRKQQADQQSADKVIQGMSKIAGVGAALTEKQQEEEERQLEAKSAVNWKKNIEKNRRHIDYSDIFDEDVGSDEGMWVWEIENFYPSIMDEAFHGQFYDADAYLVLKTTREASGQLRHAIFYWLGEHASLDKGMCSAVHAVGLRNHLNATCRTQREEMNDETEEFLTLFGEEIVYIEGGRTISGFYTTEKPAHLTRLYRAGVNGTAVEMEPVPLSVESLDPRFCFLLDAGETIWIWSGYKSRITVSNKARLFAERLNKRDRKGKSEIETCRQARCPPEFWQALTGNPDKPQGAIVEHVPEGFVAERKKLYKVNIGMGFLELPQVELPKGIAKQDMLGSKGVFVLDSNSDIFLWIGKKANRLLKMAGQKLVVELHQMIDRPDYAQVYRETEGEESMMFRSKFAGWDEIVPVDYTRTSDSVQRVPDLKVIVKKDNMMRADLAALFLERQPSMSYEESEELMEDCNYDLELMESFVLEGKKFVKLPQKEFGIFYTMDCYVFLCRYAVMPEEDEEGEDEHDEDDKPEMDFKCVVYFWQGRDASNMGWLNFTFQLQPNFEEIFKDKLEVVRMYQQQENHKFLSHFKRKFLIKRGRRGLTKNLGGKWPELFQMRANGSSVCNRTIQVDCQANQLCSAFCHMLRIPFKEIEEDGHRGVVYVWMGKDSDPREHEFARQVASDLVVRDDDNDFRIVEVQEGEENEEFWKVLGGKKKYETDSSFVKHTRLFRCTNEKGYFAISEKTVDFCQDDLDDDDIMILDNGDAVFLWIGARSSDIEAKLSYQAAQVYHASMRMKANEKPRKFMLAVRGRESCRFRKCFHAWSKMKEPMG.

LRR repeat units follow at residues 6–31 (LQFVKGIDFSGNDFSGDRFPHDVEQM), 32–54 (TQMTWLKLNDSKLEQVPDELSRC), 56–77 (NLEHLQMAHNQLISVHGELSDL), 78–102 (PRLRSVIVRDNNLKTAGIPTDIFRM), 103–126 (KDLTIIDLSRNQLREVPTNLEYAK), 128–148 (SIVLNLSYNNIETIPNSVCAN), 149–172 (LIDLLFLDLSNNKLDMLPPQIRRL), 174–195 (MLQSLKLSNNPLNHFQLKQLPS), 197–221 (TSLSVLHMSNTNRTLDNIPPTLDDM), 222–244 (HNLRDVDFSENNLPIVPEALFKL), 246–267 (NLRKLNLSGNKIEKLNMTEGEW), 268–290 (ENLETLNMSHNQLTVLPDCVVKL), 292–315 (RLTKLYAANNQLTFEGIPSGIGKL), 316–338 (IQLTVLHLSYNKLELVPEGISRC), 339–361 (VKLQKLKLDHNRLITLPEGIHLL), and 363–384 (DLKVLDLHENENLVMPPKPNDA). 4 Gelsolin-like repeats span residues 523–600 (MDEA…EEFL), 640–714 (AVEM…PEFW), 759–832 (ELPK…MMFR), and 1168–1243 (EKTV…CRFR).

The protein belongs to the villin/gelsolin family.

Functionally, may play a key role in embryonic cellularization by interacting with both the cytoskeleton and other cellular components. The chain is Protein flightless-1 homolog (fli-1) from Caenorhabditis elegans.